Here is a 165-residue protein sequence, read N- to C-terminus: Phosphopantetheine adenylyltransferase (165 aa).

Thr10 provides a ligand contact to substrate. ATP is bound by residues 10 to 11 (TF) and His18. Substrate-binding residues include Lys42, Leu75, and Arg89. Residues 90-92 (GLR), Glu100, and 125-131 (YTYVASS) contribute to the ATP site.

Belongs to the bacterial CoaD family. In terms of assembly, homohexamer. Mg(2+) serves as cofactor.

It localises to the cytoplasm. It catalyses the reaction (R)-4'-phosphopantetheine + ATP + H(+) = 3'-dephospho-CoA + diphosphate. Its pathway is cofactor biosynthesis; coenzyme A biosynthesis; CoA from (R)-pantothenate: step 4/5. Reversibly transfers an adenylyl group from ATP to 4'-phosphopantetheine, yielding dephospho-CoA (dPCoA) and pyrophosphate. The chain is Phosphopantetheine adenylyltransferase from Chlorobium phaeobacteroides (strain BS1).